The primary structure comprises 339 residues: MNQTLMEIKERALSQINASDTLDALNEIRVNFLGKKGELTSVLKSMKDVAPEDRPKVGQLVNEARESLEEALESKKEAFGKVLREAKMKAETIDVTLPAKKPMLGHRHPNTIALEEAERIFVGMGYEVVEGPEIEYDYYNFEALNIPANHPAKDEQDTFYVTSNILLRTQTSPVQVHVMEQGKLPIRMIAPGRVFRSDEVDATHSPSFHQIEGLVIDKNITFADLKGTLAEFAKQLFGEETKVKFRPHHFPFTEPSAEVDVSCFKCGGKGCRFCKGSGWIEILGCGMVHPRVLEMSGIDPEEYTGFAFGVGLERIALLKYEIDDMRLLYENDMRFLKQF.

Glu254 serves as a coordination point for Mg(2+).

It belongs to the class-II aminoacyl-tRNA synthetase family. Phe-tRNA synthetase alpha subunit type 1 subfamily. In terms of assembly, tetramer of two alpha and two beta subunits. It depends on Mg(2+) as a cofactor.

It is found in the cytoplasm. It carries out the reaction tRNA(Phe) + L-phenylalanine + ATP = L-phenylalanyl-tRNA(Phe) + AMP + diphosphate + H(+). The sequence is that of Phenylalanine--tRNA ligase alpha subunit from Lachnoclostridium phytofermentans (strain ATCC 700394 / DSM 18823 / ISDg) (Clostridium phytofermentans).